The primary structure comprises 355 residues: tRNA pseudouridine synthase D (355 aa).

The Nucleophile role is filled by Asp84. A TRUD domain is found at 160–306 (GVPNYFGLQR…MAHERRILRL (147 aa)).

This sequence belongs to the pseudouridine synthase TruD family.

It carries out the reaction uridine(13) in tRNA = pseudouridine(13) in tRNA. In terms of biological role, responsible for synthesis of pseudouridine from uracil-13 in transfer RNAs. In Pseudomonas aeruginosa (strain ATCC 15692 / DSM 22644 / CIP 104116 / JCM 14847 / LMG 12228 / 1C / PRS 101 / PAO1), this protein is tRNA pseudouridine synthase D.